The primary structure comprises 372 residues: N-methyl-L-tryptophan oxidase (372 aa).

4 to 34 serves as a coordination point for FAD; sequence DLIIIGSGSVGAAAGYYATRAGLNVLMTDAH. Cys308 bears the S-8alpha-FAD cysteine mark.

It belongs to the MSOX/MTOX family. MTOX subfamily. In terms of assembly, monomer. FAD is required as a cofactor.

It carries out the reaction N(alpha)-methyl-L-tryptophan + O2 + H2O = L-tryptophan + formaldehyde + H2O2. Catalyzes the oxidative demethylation of N-methyl-L-tryptophan. The chain is N-methyl-L-tryptophan oxidase from Escherichia coli O81 (strain ED1a).